We begin with the raw amino-acid sequence, 464 residues long: Soluble pyridine nucleotide transhydrogenase (464 aa).

Residue 35–44 (DNRPLVGGNC) coordinates FAD.

Belongs to the class-I pyridine nucleotide-disulfide oxidoreductase family. FAD serves as cofactor.

It is found in the cytoplasm. The catalysed reaction is NAD(+) + NADPH = NADH + NADP(+). In terms of biological role, conversion of NADPH, generated by peripheral catabolic pathways, to NADH, which can enter the respiratory chain for energy generation. This is Soluble pyridine nucleotide transhydrogenase from Ectopseudomonas mendocina (strain ymp) (Pseudomonas mendocina).